The following is a 249-amino-acid chain: uncharacterized protein (249 aa).

The protein resides in the cytoplasm. It is found in the nucleus. The protein localises to the nucleolus. This is an uncharacterized protein from Schizosaccharomyces pombe (strain 972 / ATCC 24843) (Fission yeast).